A 611-amino-acid chain; its full sequence is tRNA uridine 5-carboxymethylaminomethyl modification enzyme MnmG (611 aa).

Gly-14–Gly-19 contributes to the FAD binding site. Position 274–288 (Gly-274–Phe-288) interacts with NAD(+).

This sequence belongs to the MnmG family. In terms of assembly, homodimer. Heterotetramer of two MnmE and two MnmG subunits. FAD is required as a cofactor.

Its subcellular location is the cytoplasm. Its function is as follows. NAD-binding protein involved in the addition of a carboxymethylaminomethyl (cmnm) group at the wobble position (U34) of certain tRNAs, forming tRNA-cmnm(5)s(2)U34. This is tRNA uridine 5-carboxymethylaminomethyl modification enzyme MnmG from Chlamydia felis (strain Fe/C-56) (Chlamydophila felis).